The sequence spans 150 residues: Keratin-associated protein 15-1 (150 aa).

The protein belongs to the PMG family. As to quaternary structure, interacts with hair keratins. Expressed at high levels in skin and at lower levels in the developing mammary gland.

Functionally, in the hair cortex, hair keratin intermediate filaments are embedded in an interfilamentous matrix, consisting of hair keratin-associated proteins (KRTAP), which are essential for the formation of a rigid and resistant hair shaft through their extensive disulfide bond cross-linking with abundant cysteine residues of hair keratins. The matrix proteins include the high-sulfur and high-glycine-tyrosine keratins. The sequence is that of Keratin-associated protein 15-1 from Mus musculus (Mouse).